The primary structure comprises 352 residues: Peptide chain release factor 1 (352 aa).

At Gln-230 the chain carries N5-methylglutamine.

It belongs to the prokaryotic/mitochondrial release factor family. Methylated by PrmC. Methylation increases the termination efficiency of RF1.

The protein localises to the cytoplasm. In terms of biological role, peptide chain release factor 1 directs the termination of translation in response to the peptide chain termination codons UAG and UAA. This Exiguobacterium sibiricum (strain DSM 17290 / CCUG 55495 / CIP 109462 / JCM 13490 / 255-15) protein is Peptide chain release factor 1.